The chain runs to 284 residues: Efem/EfeO family lipoprotein (284 aa).

Positions 1–17 (MKKLTTLLLASTLLIAA) are cleaved as a signal peptide. Residue Cys18 is the site of N-palmitoyl cysteine attachment. Cys18 carries S-diacylglycerol cysteine lipidation.

It belongs to the EfeM/EfeO family.

The protein localises to the cell membrane. The sequence is that of Efem/EfeO family lipoprotein from Staphylococcus aureus (strain USA300).